The following is a 423-amino-acid chain: UPF0229 protein PSPA7_0730 (423 aa).

Positions 84–107 (AGEHIARPSGGGGGRGGGKASNSG) are disordered. Over residues 92–102 (SGGGGGRGGGK) the composition is skewed to gly residues.

The protein belongs to the UPF0229 family.

The protein is UPF0229 protein PSPA7_0730 of Pseudomonas paraeruginosa (strain DSM 24068 / PA7) (Pseudomonas aeruginosa (strain PA7)).